Here is a 481-residue protein sequence, read N- to C-terminus: MDTKGSTVTISSSTPPQNCSGNTNVRTNSSNKSCYHDVQSTGHALQTPQGQGCRPSPCLYRCPNYLIRTYSFHPCPDDCSRCSDGINSHEKETMQILNERLASYLEKVRMLEGENADLEDKIQEECSKTLPILCPDYLSYYTTIEQLQQKILCTKAENSRLVSQIDNTKLAADDLRAKYEAELSLRQLVEADANGLKQILDALTLSKADLEARVQSLTEELLCLKTNHEEEINSLQCQLGDRINIEVTAAPSVDLNQILQKMRCQYESIVETNRKDVEEWFNTQMEELNQQVVSSSQQQQCCQKDIIELRRTISALEVELQAQHRMRDSQECILAETEARYTALLAQIQSLIHNLEAQVAEIRSALQRQNQEYEVLLDIKSRLECEIATYRSLLESLDGRLPCNPCTTTWEPSCQARAMECLTPVYTSISLPGIHKPCRASGPPSRILVKICTITKEIKDGKVISSHEHVQPCYITRPAKV.

The segment at 1 to 25 (MDTKGSTVTISSSTPPQNCSGNTNV) is disordered. A head region spans residues 1–90 (MDTKGSTVTI…RCSDGINSHE (90 aa)). One can recognise an IF rod domain in the interval 90–401 (EKETMQILNE…SLLESLDGRL (312 aa)). Residues 91 to 125 (KETMQILNERLASYLEKVRMLEGENADLEDKIQEE) are coil 1A. The segment at 126–136 (CSKTLPILCPD) is linker 1. A coil 1B region spans residues 137 to 237 (YLSYYTTIEQ…HEEEINSLQC (101 aa)). Positions 238–253 (QLGDRINIEVTAAPSV) are linker 12. The interval 254-397 (DLNQILQKMR…ATYRSLLESL (144 aa)) is coil 2. Residues 398–481 (DGRLPCNPCT…PCYITRPAKV (84 aa)) are tail.

The protein belongs to the intermediate filament family. As to quaternary structure, heterotetramer of two type I and two type II keratins.

May play a role in late hair differentiation. In Rattus norvegicus (Rat), this protein is Keratin, type I cytoskeletal 39 (Krt39).